A 227-amino-acid polypeptide reads, in one-letter code: Flagellar L-ring protein (227 aa).

The first 16 residues, 1-16, serve as a signal peptide directing secretion; the sequence is MRNIILFAAGTLLLSG. Residue C17 is the site of N-palmitoyl cysteine attachment. Residue C17 is the site of S-diacylglycerol cysteine attachment.

The protein belongs to the FlgH family. In terms of assembly, the basal body constitutes a major portion of the flagellar organelle and consists of four rings (L,P,S, and M) mounted on a central rod.

It localises to the cell outer membrane. The protein resides in the bacterial flagellum basal body. In terms of biological role, assembles around the rod to form the L-ring and probably protects the motor/basal body from shearing forces during rotation. The protein is Flagellar L-ring protein of Pseudoalteromonas translucida (strain TAC 125).